Reading from the N-terminus, the 264-residue chain is COP9 signalosome complex subunit 7b (264 aa).

The residue at position 2 (Ala-2) is an N-acetylalanine. A PCI domain is found at 2–159 (AGEQKPSSNL…QLLEVDFCIG (158 aa)). A coiled-coil region spans residues 194-237 (RANQYKENHSRTQQQVEAEVTNIKKTLKATASSSAQEMEQQLAE). The segment covering 223–232 (TASSSAQEME) has biased composition (polar residues). The segment at 223 to 264 (TASSSAQEMEQQLAERECPPHAEQRQPTKKMSKVKGLVSSRH) is disordered. The span at 235–248 (LAERECPPHAEQRQ) shows a compositional bias: basic and acidic residues.

This sequence belongs to the CSN7/EIF3M family. CSN7 subfamily. In terms of assembly, component of the CSN complex, composed of COPS1/GPS1, COPS2, COPS3, COPS4, COPS5, COPS6, COPS7 (COPS7A or COPS7B), COPS8 and COPS9. In the complex, it probably interacts directly with COPS1, COPS2, COPS4, COPS5, COPS6 and COPS8. Interacts with EIF3S6.

The protein localises to the cytoplasm. Its subcellular location is the nucleus. Component of the COP9 signalosome complex (CSN), a complex involved in various cellular and developmental processes. The CSN complex is an essential regulator of the ubiquitin (Ubl) conjugation pathway by mediating the deneddylation of the cullin subunits of SCF-type E3 ligase complexes, leading to decrease the Ubl ligase activity of SCF-type complexes such as SCF, CSA or DDB2. The complex is also involved in phosphorylation of p53/TP53, JUN, I-kappa-B-alpha/NFKBIA, ITPK1 and IRF8/ICSBP, possibly via its association with CK2 and PKD kinases. CSN-dependent phosphorylation of TP53 and JUN promotes and protects degradation by the Ubl system, respectively. This Bos taurus (Bovine) protein is COP9 signalosome complex subunit 7b (COPS7B).